Here is a 215-residue protein sequence, read N- to C-terminus: Hibernation-associated plasma protein HP-25 (215 aa).

Residues 1–28 form the signal peptide; the sequence is MPAQRGGALSMGAAGFWILVLSITSALA. Residues 29 to 96 are disordered; it reads DSNNQGNSEP…RPKSAFAVKL (68 aa). 2 stretches are compositionally biased toward pro residues: residues 39–51 and 60–77; these read CGPP…PGIP and LGPP…PQGP. Positions 40 to 81 constitute a Collagen-like domain; the sequence is GPPGPPGPPGIPGFPGAPGALGPPGPPGVPGIPGPQGPPGDV. One can recognise a C1q domain in the interval 85–215; it reads SSRPKSAFAV…VFFGYLLYGK (131 aa). The N-linked (GlcNAc...) asparagine glycan is linked to Asn-167.

As to expression, plasma; synthesized in the liver.

The protein localises to the secreted. Its function is as follows. Plasma proteins HP-20, HP-25, HP-27 and HP-55 form a 140 kDa complex via disulfide bonds in the plasma and are hibernation specific. The sequence is that of Hibernation-associated plasma protein HP-25 from Tamias sibiricus (Siberian chipmunk).